A 75-amino-acid chain; its full sequence is MASKPFFRRRKVCPFSGDNAPKIDYKDTRLLQRYISERGKIVPSRITAVSAKKQRELARAIKRARFLALLPYAVK.

Belongs to the bacterial ribosomal protein bS18 family. As to quaternary structure, part of the 30S ribosomal subunit. Forms a tight heterodimer with protein bS6.

Its function is as follows. Binds as a heterodimer with protein bS6 to the central domain of the 16S rRNA, where it helps stabilize the platform of the 30S subunit. The sequence is that of Small ribosomal subunit protein bS18 from Roseobacter denitrificans (strain ATCC 33942 / OCh 114) (Erythrobacter sp. (strain OCh 114)).